The chain runs to 205 residues: Calcium-binding allergen Bet v 3 (205 aa).

The tract at residues 1 to 26 (MPCSTEAMEKAGHGHASTPRKRSLSN) is disordered. 4 EF-hand domains span residues 36–71 (LNTLRLRRIFDLFDKNSDGIITVDELSRALNLLGLE), 72–107 (TDLSELESTVKSFTREGNIGLQFEDFISLHQSLNDS), 130–165 (QEEADSFGGFKVFDEDGDGYISARELQMVLGKLGFS), and 168–203 (SEIDRVEKMIVSVDSNRDGRVDFFEFKDMMRSVLVR). 4 residues coordinate Ca(2+): D49, N51, D53, and E60. Residues D143, D145, D147, Y149, E154, D181, N183, D185, R187, and E192 each contribute to the Ca(2+) site.

Functionally, could be involved in calcium metabolism in pollen. Binds 3 calcium ions. This Betula pendula (European white birch) protein is Calcium-binding allergen Bet v 3 (BETVIII).